We begin with the raw amino-acid sequence, 660 residues long: ATP-dependent zinc metalloprotease FtsH (660 aa).

Residues 1–20 (MMPSSQRPSPRGSRQSPSPD) are disordered. Over 1–24 (MMPSSQRPSPRGSRQSPSPDQRGR) the chain is Cytoplasmic. Residues 25–45 (IAFAILATLVVAVLLLTLFSH) traverse the membrane as a helical segment. At 46–118 (APSGQPLGYS…VQVSYITPGP (73 aa)) the chain is on the extracellular side. Residues 119–139 (GIASTIIEYVIFFGIFIGIWV) form a helical membrane-spanning segment. Topologically, residues 140–660 (YLTRRTQGSV…ASHDDTDPVS (521 aa)) are cytoplasmic. An ATP-binding site is contributed by 213–220 (GPPGTGKT). His435 lines the Zn(2+) pocket. The active site involves Glu436. Residues His439 and Asp511 each coordinate Zn(2+).

In the central section; belongs to the AAA ATPase family. It in the C-terminal section; belongs to the peptidase M41 family. In terms of assembly, homohexamer. Zn(2+) serves as cofactor.

It is found in the cell membrane. Acts as a processive, ATP-dependent zinc metallopeptidase for both cytoplasmic and membrane proteins. Plays a role in the quality control of integral membrane proteins. In Acidimicrobium ferrooxidans (strain DSM 10331 / JCM 15462 / NBRC 103882 / ICP), this protein is ATP-dependent zinc metalloprotease FtsH.